Reading from the N-terminus, the 333-residue chain is Ketol-acid reductoisomerase (NADP(+)) (333 aa).

Positions 1–171 constitute a KARI N-terminal Rossmann domain; that stretch reads MSNDTQPTIA…GGARANIIKT (171 aa). NADP(+)-binding positions include 14-17, Arg37, Thr42, and 72-75; these read YGSQ and DMVQ. His97 is an active-site residue. Gly123 contacts NADP(+). One can recognise a KARI C-terminal knotted domain in the interval 172-317; it reads TFKEETETDL…KKLRAKMVWL (146 aa). Mg(2+) contacts are provided by Asp180, Glu184, Glu216, and Glu220. Ser241 contributes to the substrate binding site.

The protein belongs to the ketol-acid reductoisomerase family. Mg(2+) serves as cofactor.

It carries out the reaction (2R)-2,3-dihydroxy-3-methylbutanoate + NADP(+) = (2S)-2-acetolactate + NADPH + H(+). It catalyses the reaction (2R,3R)-2,3-dihydroxy-3-methylpentanoate + NADP(+) = (S)-2-ethyl-2-hydroxy-3-oxobutanoate + NADPH + H(+). The protein operates within amino-acid biosynthesis; L-isoleucine biosynthesis; L-isoleucine from 2-oxobutanoate: step 2/4. Its pathway is amino-acid biosynthesis; L-valine biosynthesis; L-valine from pyruvate: step 2/4. In terms of biological role, involved in the biosynthesis of branched-chain amino acids (BCAA). Catalyzes an alkyl-migration followed by a ketol-acid reduction of (S)-2-acetolactate (S2AL) to yield (R)-2,3-dihydroxy-isovalerate. In the isomerase reaction, S2AL is rearranged via a Mg-dependent methyl migration to produce 3-hydroxy-3-methyl-2-ketobutyrate (HMKB). In the reductase reaction, this 2-ketoacid undergoes a metal-dependent reduction by NADPH to yield (R)-2,3-dihydroxy-isovalerate. The polypeptide is Ketol-acid reductoisomerase (NADP(+)) (Xanthomonas campestris pv. campestris (strain 8004)).